The sequence spans 151 residues: Protein ECM12 (151 aa).

Asparagine 2 carries an N-linked (GlcNAc...) asparagine glycan. A run of 2 helical transmembrane segments spans residues 17 to 37 and 51 to 71; these read LLVFYFHIKQQAIMPFFIFFF and AFLAKHVFVGVCSPFFVVGFF. N-linked (GlcNAc...) asparagine glycosylation is found at asparagine 132 and asparagine 137.

The protein resides in the membrane. May be involved in cell wall organization and biogenesis. The chain is Protein ECM12 (ECM12) from Saccharomyces cerevisiae (strain ATCC 204508 / S288c) (Baker's yeast).